Reading from the N-terminus, the 62-residue chain is Large ribosomal subunit protein bL28 (62 aa).

The protein belongs to the bacterial ribosomal protein bL28 family.

The sequence is that of Large ribosomal subunit protein bL28 from Clostridioides difficile (strain 630) (Peptoclostridium difficile).